Here is a 293-residue protein sequence, read N- to C-terminus: Signal recognition particle receptor FtsY (293 aa).

Residues 93–100 (GVNGAGKT), 175–179 (DTAGR), and 239–242 (TKLD) contribute to the GTP site.

This sequence belongs to the GTP-binding SRP family. FtsY subfamily. As to quaternary structure, part of the signal recognition particle protein translocation system, which is composed of SRP and FtsY. SRP is a ribonucleoprotein composed of Ffh and a 4.5S RNA molecule.

Its subcellular location is the cell inner membrane. It localises to the cytoplasm. It carries out the reaction GTP + H2O = GDP + phosphate + H(+). Functionally, involved in targeting and insertion of nascent membrane proteins into the cytoplasmic membrane. Acts as a receptor for the complex formed by the signal recognition particle (SRP) and the ribosome-nascent chain (RNC). Interaction with SRP-RNC leads to the transfer of the RNC complex to the Sec translocase for insertion into the membrane, the hydrolysis of GTP by both Ffh and FtsY, and the dissociation of the SRP-FtsY complex into the individual components. The sequence is that of Signal recognition particle receptor FtsY from Helicobacter pylori (strain J99 / ATCC 700824) (Campylobacter pylori J99).